The primary structure comprises 292 residues: 4-hydroxy-tetrahydrodipicolinate synthase (292 aa).

Thr45 lines the pyruvate pocket. The Proton donor/acceptor role is filled by Tyr133. Residue Lys161 is the Schiff-base intermediate with substrate of the active site. Residue Ile203 participates in pyruvate binding.

This sequence belongs to the DapA family. As to quaternary structure, homodimer.

It is found in the cytoplasm. It carries out the reaction L-aspartate 4-semialdehyde + pyruvate = (2S,4S)-4-hydroxy-2,3,4,5-tetrahydrodipicolinate + H2O + H(+). Its pathway is amino-acid biosynthesis; L-lysine biosynthesis via DAP pathway; (S)-tetrahydrodipicolinate from L-aspartate: step 3/4. Catalyzes the condensation of (S)-aspartate-beta-semialdehyde [(S)-ASA] and pyruvate to 4-hydroxy-tetrahydrodipicolinate (HTPA). The sequence is that of 4-hydroxy-tetrahydrodipicolinate synthase from Stutzerimonas stutzeri (strain A1501) (Pseudomonas stutzeri).